The sequence spans 90 residues: Small ribosomal subunit protein bS20 (90 aa).

The protein belongs to the bacterial ribosomal protein bS20 family.

Its function is as follows. Binds directly to 16S ribosomal RNA. The chain is Small ribosomal subunit protein bS20 from Fusobacterium nucleatum subsp. nucleatum (strain ATCC 25586 / DSM 15643 / BCRC 10681 / CIP 101130 / JCM 8532 / KCTC 2640 / LMG 13131 / VPI 4355).